The primary structure comprises 523 residues: Synaptotagmin-10 (523 aa).

At 1-55 the chain is on the vesicular side; that stretch reads MSFHKEDGVNSLCQKALHIVTELCFAGQVEWEKCSGIFPRDRGSQGGSSTDISVS. The tract at residues 13 to 35 is cysteine motif; the sequence is CQKALHIVTELCFAGQVEWEKCS. The chain crosses the membrane as a helical span at residues 56-76; it reads LLAVVVSFCGLALLVVSLFVF. Topologically, residues 77–523 are cytoplasmic; it reads WKLCWPCWKS…CPSPKPPSTP (447 aa). Threonine 136 bears the Phosphothreonine mark. C2 domains are found at residues 231–352 and 363–496; these read ICGK…TVWK and DLGE…THWH. Residues aspartate 262, aspartate 268, aspartate 320, phenylalanine 321, aspartate 322, serine 325, aspartate 328, aspartate 394, aspartate 400, aspartate 454, and aspartate 456 each coordinate Ca(2+).

It belongs to the synaptotagmin family. In terms of assembly, homodimer; disulfide-linked via the cysteine motif. Can also form heterodimers with SYT3, SYT6, SYT7 and SYT9. It depends on Ca(2+) as a cofactor. Expressed only in pancreas, lung and kidney.

It localises to the cytoplasmic vesicle. The protein resides in the secretory vesicle membrane. Its function is as follows. Ca(2+) sensor specifically required for the Ca(2+)-dependent exocytosis of secretory vesicles containing IGF1 in neurons of the olfactory bulb. Exocytosis of IGF1 is required for sensory perception of smell. Not involved in Ca(2+)-dependent synaptic vesicle exocytosis. Acts through Ca(2+) and phospholipid binding to the C2 domain: Ca(2+) induces binding of the C2-domains to phospholipid membranes and to assembled SNARE-complexes; both actions contribute to triggering exocytosis. The polypeptide is Synaptotagmin-10 (SYT10) (Homo sapiens (Human)).